Consider the following 225-residue polypeptide: 2-C-methyl-D-erythritol 4-phosphate cytidylyltransferase (225 aa).

Belongs to the IspD/TarI cytidylyltransferase family. IspD subfamily.

It catalyses the reaction 2-C-methyl-D-erythritol 4-phosphate + CTP + H(+) = 4-CDP-2-C-methyl-D-erythritol + diphosphate. It participates in isoprenoid biosynthesis; isopentenyl diphosphate biosynthesis via DXP pathway; isopentenyl diphosphate from 1-deoxy-D-xylulose 5-phosphate: step 2/6. In terms of biological role, catalyzes the formation of 4-diphosphocytidyl-2-C-methyl-D-erythritol from CTP and 2-C-methyl-D-erythritol 4-phosphate (MEP). This chain is 2-C-methyl-D-erythritol 4-phosphate cytidylyltransferase, found in Cereibacter sphaeroides (strain KD131 / KCTC 12085) (Rhodobacter sphaeroides).